We begin with the raw amino-acid sequence, 293 residues long: Acetyl-coenzyme A carboxylase carboxyl transferase subunit beta (293 aa).

One can recognise a CoA carboxyltransferase N-terminal domain in the interval L29–K293. 4 residues coordinate Zn(2+): C33, C36, C52, and C55. Residues C33–C55 form a C4-type zinc finger.

This sequence belongs to the AccD/PCCB family. Acetyl-CoA carboxylase is a heterohexamer composed of biotin carboxyl carrier protein (AccB), biotin carboxylase (AccC) and two subunits each of ACCase subunit alpha (AccA) and ACCase subunit beta (AccD). Zn(2+) is required as a cofactor.

The protein localises to the cytoplasm. The enzyme catalyses N(6)-carboxybiotinyl-L-lysyl-[protein] + acetyl-CoA = N(6)-biotinyl-L-lysyl-[protein] + malonyl-CoA. The protein operates within lipid metabolism; malonyl-CoA biosynthesis; malonyl-CoA from acetyl-CoA: step 1/1. Component of the acetyl coenzyme A carboxylase (ACC) complex. Biotin carboxylase (BC) catalyzes the carboxylation of biotin on its carrier protein (BCCP) and then the CO(2) group is transferred by the transcarboxylase to acetyl-CoA to form malonyl-CoA. The protein is Acetyl-coenzyme A carboxylase carboxyl transferase subunit beta of Prochlorococcus marinus (strain MIT 9303).